We begin with the raw amino-acid sequence, 420 residues long: Putative zinc metalloprotease Lmo1318 (420 aa).

Zn(2+) is bound at residue His18. Glu19 is an active-site residue. His22 provides a ligand contact to Zn(2+). 4 helical membrane-spanning segments follow: residues 172–194 (TIFAGPLFNFILAILIFTALAFV), 304–326 (NWIVQIFTILGNMFTGGFSLDML), 347–369 (VLNWTAVLSINLGIVNLLPLPAL), and 393–412 (GIIHFAGFALLMVLMILVTW). A PDZ domain is found at 176–267 (GPLFNFILAI…DGKTQDIDVK (92 aa)).

The protein belongs to the peptidase M50B family. The cofactor is Zn(2+).

It localises to the cell membrane. The protein is Putative zinc metalloprotease Lmo1318 of Listeria monocytogenes serovar 1/2a (strain ATCC BAA-679 / EGD-e).